Here is a 353-residue protein sequence, read N- to C-terminus: Histidinol-phosphate aminotransferase (353 aa).

Position 214 is an N6-(pyridoxal phosphate)lysine (Lys-214).

It belongs to the class-II pyridoxal-phosphate-dependent aminotransferase family. Histidinol-phosphate aminotransferase subfamily. In terms of assembly, homodimer. The cofactor is pyridoxal 5'-phosphate.

It catalyses the reaction L-histidinol phosphate + 2-oxoglutarate = 3-(imidazol-4-yl)-2-oxopropyl phosphate + L-glutamate. It functions in the pathway amino-acid biosynthesis; L-histidine biosynthesis; L-histidine from 5-phospho-alpha-D-ribose 1-diphosphate: step 7/9. The protein is Histidinol-phosphate aminotransferase of Gloeobacter violaceus (strain ATCC 29082 / PCC 7421).